The sequence spans 219 residues: Peptide methionine sulfoxide reductase MsrA (219 aa).

The tract at residues 1 to 20 is disordered; sequence MGLFRSPRQNLPTAADALPG. Residue cysteine 55 is part of the active site.

The protein belongs to the MsrA Met sulfoxide reductase family.

The enzyme catalyses L-methionyl-[protein] + [thioredoxin]-disulfide + H2O = L-methionyl-(S)-S-oxide-[protein] + [thioredoxin]-dithiol. The catalysed reaction is [thioredoxin]-disulfide + L-methionine + H2O = L-methionine (S)-S-oxide + [thioredoxin]-dithiol. In terms of biological role, has an important function as a repair enzyme for proteins that have been inactivated by oxidation. Catalyzes the reversible oxidation-reduction of methionine sulfoxide in proteins to methionine. This Rhodospirillum centenum (strain ATCC 51521 / SW) protein is Peptide methionine sulfoxide reductase MsrA.